The primary structure comprises 272 residues: 3-hydroxyanthranilate 3,4-dioxygenase (272 aa).

A domain A (catalytic) region spans residues methionine 1–serine 154. Arginine 38 contributes to the O2 binding site. Positions 42, 48, and 86 each coordinate Fe cation. Substrate is bound at residue glutamate 48. Substrate is bound by residues arginine 90 and glutamate 100. Positions lysine 155–leucine 169 are linker. The tract at residues methionine 170–lysine 272 is domain B.

This sequence belongs to the 3-HAO family. It depends on Fe(2+) as a cofactor.

It is found in the cytoplasm. It catalyses the reaction 3-hydroxyanthranilate + O2 = (2Z,4Z)-2-amino-3-carboxymuconate 6-semialdehyde. It functions in the pathway cofactor biosynthesis; NAD(+) biosynthesis; quinolinate from L-kynurenine: step 3/3. Catalyzes the oxidative ring opening of 3-hydroxyanthranilate to 2-amino-3-carboxymuconate semialdehyde, which spontaneously cyclizes to quinolinate. The sequence is that of 3-hydroxyanthranilate 3,4-dioxygenase from Nematostella vectensis (Starlet sea anemone).